We begin with the raw amino-acid sequence, 153 residues long: Glycosylation-dependent cell adhesion molecule 1 (153 aa).

A signal peptide spans 1-18; sequence MKFLCVLLLASLAATSLA. Threonine 34 carries O-linked (GalNAc...) threonine; partial glycosylation. A phosphoserine mark is found at serine 47, serine 52, serine 56, serine 58, and serine 64. The O-linked (HexNAc...) serine glycan is linked to serine 78. Asparagine 95 is a glycosylation site (N-linked (GlcNAc...) asparagine). Residues 95-115 form a disordered region; the sequence is NATLGSEETTEHTPSDASTTE. O-linked (GalNAc...) threonine glycosylation occurs at threonine 104.

The protein belongs to the PP3/GlyCAM-1 family. As to expression, highly and specifically expressed in the lactating mammary gland.

It localises to the membrane. The polypeptide is Glycosylation-dependent cell adhesion molecule 1 (GLYCAM1) (Bos taurus (Bovine)).